A 360-amino-acid chain; its full sequence is Nucleoporin SEH1-B (360 aa).

WD repeat units lie at residues D10 to C49, T55 to K96, D111 to Q152, S160 to A210, S217 to S258, and N276 to C315.

The protein belongs to the WD repeat SEC13 family. In terms of assembly, component of the Nup107-160 subcomplex of the nuclear pore complex (NPC). The Nup107-160 subcomplex includes NUP160, NUP133, NUP107, NUP98, NUP85, NUP43, NUP37, SEH1 and SEC13. Component of the GATOR2 subcomplex, composed of MIOS, SEC13, SEH1L, WDR24 and WDR59. The GATOR2 complex interacts with CASTOR1 and CASTOR2; the interaction is negatively regulated by arginine. The GATOR2 complex interacts with SESN1, SESN2 and SESN3; the interaction is negatively regulated by amino acids.

It localises to the chromosome. The protein resides in the centromere. The protein localises to the kinetochore. Its subcellular location is the nucleus. It is found in the nuclear pore complex. It localises to the lysosome membrane. With respect to regulation, the GATOR2 complex is negatively regulated by the upstream amino acid sensors CASTOR1 and SESN2, which sequester the GATOR2 complex in absence of amino acids. In the presence of abundant amino acids, GATOR2 is released from CASTOR1 and SESN2 and activated. Its function is as follows. Component of the Nup107-160 subcomplex of the nuclear pore complex (NPC). The Nup107-160 subcomplex is required for the assembly of a functional NPC. The Nup107-160 subcomplex is also required for normal kinetochore microtubule attachment, mitotic progression and chromosome segregation. This subunit plays a role in recruitment of the Nup107-160 subcomplex to the kinetochore. In terms of biological role, as a component of the GATOR2 complex, functions as an activator of the amino acid-sensing branch of the mTORC1 signaling pathway. The GATOR2 complex indirectly activates mTORC1 through the inhibition of the GATOR1 subcomplex. GATOR2 probably acts as an E3 ubiquitin-protein ligase toward GATOR1. In the presence of abundant amino acids, the GATOR2 complex mediates ubiquitination of the NPRL2 core component of the GATOR1 complex, leading to GATOR1 inactivation. In the absence of amino acids, GATOR2 is inhibited, activating the GATOR1 complex. The protein is Nucleoporin SEH1-B (seh1l-b) of Xenopus laevis (African clawed frog).